Here is a 361-residue protein sequence, read N- to C-terminus: Fructose-bisphosphate aldolase (361 aa).

T2 carries the N-acetylthreonine modification. Residues R56 and K147 each contribute to the substrate site. Residue E188 is the Proton acceptor of the active site. K230 (schiff-base intermediate with dihydroxyacetone-P) is an active-site residue.

Belongs to the class I fructose-bisphosphate aldolase family. In terms of assembly, homotetramer. As to expression, mainly expressed in the heads and partly in the thoraxes of adult flies. Expressed in all adult tissues. The Alpha-beta mRNA shows strong expression in the abdomens of adults. In terms of tissue distribution, mainly expressed in adult abdominal regions and is also expressed in lesser amounts in other parts of the body. The Beta-gamma mRNA is expressed in adult heads.

The enzyme catalyses beta-D-fructose 1,6-bisphosphate = D-glyceraldehyde 3-phosphate + dihydroxyacetone phosphate. Its pathway is carbohydrate degradation; glycolysis; D-glyceraldehyde 3-phosphate and glycerone phosphate from D-glucose: step 4/4. Enzyme of the glycolytic pathway. Glycolysis is essential in glial cells but not in neurons; neurons rely on the citric acid cycle for their energy needs, and on lactate and alanine secreted into the hemolymph by glial cells to fuel it. May take part in developmental stage-specific or tissue -specific sugar-phosphate metabolisms. Protein acts on two substrates fructose 1,6-bisphosphate and fructose 1-phosphate (like other class I aldolases). This chain is Fructose-bisphosphate aldolase, found in Drosophila melanogaster (Fruit fly).